A 134-amino-acid chain; its full sequence is Small ribosomal subunit protein uS8c (134 aa).

The protein belongs to the universal ribosomal protein uS8 family. In terms of assembly, part of the 30S ribosomal subunit.

The protein localises to the plastid. It is found in the chloroplast. In terms of biological role, one of the primary rRNA binding proteins, it binds directly to 16S rRNA central domain where it helps coordinate assembly of the platform of the 30S subunit. This is Small ribosomal subunit protein uS8c (rps8) from Pelargonium hortorum (Common geranium).